Consider the following 85-residue polypeptide: UPF0291 protein SEQ_0545 (85 aa).

Residues 62–85 are disordered; that stretch reads TPEKLRQVQREKGLHGRSLDDPES.

The protein belongs to the UPF0291 family.

It is found in the cytoplasm. The sequence is that of UPF0291 protein SEQ_0545 from Streptococcus equi subsp. equi (strain 4047).